Reading from the N-terminus, the 275-residue chain is NADPH-dependent 7-cyano-7-deazaguanine reductase (275 aa).

81-83 (IES) contributes to the substrate binding site. 83-84 (SK) provides a ligand contact to NADPH. Cysteine 181 functions as the Thioimide intermediate in the catalytic mechanism. The active-site Proton donor is aspartate 188. 220-221 (HE) contacts substrate. 249–250 (RG) is a binding site for NADPH.

The protein belongs to the GTP cyclohydrolase I family. QueF type 2 subfamily. As to quaternary structure, homodimer.

It localises to the cytoplasm. It catalyses the reaction 7-aminomethyl-7-carbaguanine + 2 NADP(+) = 7-cyano-7-deazaguanine + 2 NADPH + 3 H(+). Its pathway is tRNA modification; tRNA-queuosine biosynthesis. Catalyzes the NADPH-dependent reduction of 7-cyano-7-deazaguanine (preQ0) to 7-aminomethyl-7-deazaguanine (preQ1). The chain is NADPH-dependent 7-cyano-7-deazaguanine reductase from Xylella fastidiosa (strain M23).